The primary structure comprises 329 residues: UDP-2,3-diacylglucosamine pyrophosphatase LpxG (329 aa).

The helical transmembrane segment at 2-24 threads the bilayer; it reads FVFVGSTVSLTAIVAAPVLTWIW. Residues D59, H61, D91, N123, H257, and H259 each contribute to the a divalent metal cation site.

It belongs to the metallophosphoesterase superfamily. The cofactor is Mn(2+).

The protein localises to the cell inner membrane. It catalyses the reaction UDP-2,3-diacyl-alpha-D-glucosamine + H2O = 2,3-diacyl-alpha-D-glucosaminyl 1-phosphate + UMP + 2 H(+). It functions in the pathway glycolipid biosynthesis; lipid IV(A) biosynthesis. Functionally, hydrolyzes the pyrophosphate bond of UDP-2,3-diacylglucosamine to form 2,3-diacylglucosamine 1-phosphate (lipid X) and UMP by catalyzing the attack of water at the alpha-P atom. Involved in the biosynthesis of lipid A, a phosphorylated glycolipid that anchors the lipooligosaccharide (LOS) to the outer membrane of the cell. In Chlamydia muridarum (strain MoPn / Nigg), this protein is UDP-2,3-diacylglucosamine pyrophosphatase LpxG.